A 510-amino-acid chain; its full sequence is Ribonuclease Y (510 aa).

The chain crosses the membrane as a helical span at residues 1–21 (MLIYILSGLGVLVGALLGYVV). The 61-residue stretch at 200-260 (TVSTIMLPND…LRREIAKRTI (61 aa)) folds into the KH domain. One can recognise an HD domain in the interval 326 to 419 (VLNHSIEVAL…VAAADALSAA (94 aa)).

The protein belongs to the RNase Y family.

The protein resides in the cell membrane. Its function is as follows. Endoribonuclease that initiates mRNA decay. In Thermosipho melanesiensis (strain DSM 12029 / CIP 104789 / BI429), this protein is Ribonuclease Y.